We begin with the raw amino-acid sequence, 1958 residues long: Echinoderm microtubule-associated protein-like 6 (1958 aa).

10 WD repeats span residues 59 to 100 (GHND…TVSL), 104 to 145 (VHTH…LLAS), 148 to 187 (GHSDRIFDISWDPYQPNRVVSCGVKHIKFWTLCGNALTAK), 195 to 233 (GDLQTILCLACAKEDITYSGALNGDIYVWKGLNLVRTIQ), 235 to 273 (AHSAGIFSMYACEEGFATGGRDGCIRLWDTDFKPITKID), 280 to 321 (GYKG…LILQ), 323 to 362 (HCEGELWALALHPKKPLAVTGSDDRSVRLWSLADHALIAR), 364 to 403 (NMEEAVRSVAFSPDGSQLALGMKDGSFIVLRVRDMTEVVH), 406 to 445 (DRKEVIHEMKFSPDGSYLAVGSNDGPVDVYAVAQRYKKIG), and 561 to 601 (GHSA…VSNG). Positions 603-626 (LETAPQEGGADSYSEESDSDLSDV) are disordered. Positions 615–626 (YSEESDSDLSDV) are enriched in acidic residues. 10 WD repeats span residues 725–766 (GHDD…CLSL), 770–811 (QHQR…KIAT), 814–853 (GHKDKIFVVKCNPHHVDKLVTVGIKHIKFWQQAGGGFTSK), 861–900 (GKLETMMCVSYGRMEDLVFSGAATGDIFIWKDILLLKTVK), 901–940 (AHDGPVFAMYALDKGFVTGGKDGIVELWDDMFERCLKTYA), 996–1035 (HMEGEVWGLAAHPLLPICATVSDDKTLRIWELSAQHRMLA), 1038–1077 (KLKKGGRCCAFSPDGKALAVGLNDGSFLVVNADTVEDMVS), 1080–1120 (HRKE…RVGI), 1191–1230 (SDITDVNAASLTKDCSLLATGDDFGFVKLFSYPVKGQHAR), and 1236–1276 (GHSA…TQES). The segment covering 1322-1337 (KPHQQLKEVSVEERPP) has biased composition (basic and acidic residues). The interval 1322-1353 (KPHQQLKEVSVEERPPVSRAAPQPEKLQKNNI) is disordered. WD repeat units follow at residues 1412–1456 (EHTD…TLSM), 1460–1501 (FHSK…KVAS), 1504–1543 (GHLERIFVVEFRPDSDTQFVSVGVKHMKFWTLAGSALLYK), 1553–1591 (AKMQTMLSVAFGANNLTFTGAINGDVYVWKDHFLIRLVA), 1593–1638 (AHTG…CRAF), 1685–1724 (HMEGEIWGLATHPSKDLFISASNDGTARIWDLADKKLLNK), 1726–1767 (SLGH…GKKR), 1768–1807 (DRKSAIQDIRISPDNRFLAVGSSEHTVDFYDLTQGTNLNR), 1880–1919 (ADKADVNCACVTHAGLNIVTGDDFGLVKLFDFPCTEKFAK), and 1925–1958 (GHSAHVTNIRFSYDDKYVVSTGGDDCSVFVWRCL).

It belongs to the WD repeat EMAP family.

The protein resides in the cytoplasm. It is found in the cytoskeleton. Functionally, may modify the assembly dynamics of microtubules, such that microtubules are slightly longer, but more dynamic. The polypeptide is Echinoderm microtubule-associated protein-like 6 (EML6) (Homo sapiens (Human)).